A 495-amino-acid polypeptide reads, in one-letter code: UDP-N-acetylmuramoyl-L-alanyl-D-glutamate--2,6-diaminopimelate ligase (495 aa).

Residues Leu-27, Ser-29, and 44–46 (HQA) contribute to the UDP-N-acetyl-alpha-D-muramoyl-L-alanyl-D-glutamate site. 116–122 (GTNGKTT) is an ATP binding site. UDP-N-acetyl-alpha-D-muramoyl-L-alanyl-D-glutamate contacts are provided by residues Asn-157, 158-159 (TT), Ser-185, Gln-191, and Arg-193. An N6-carboxylysine modification is found at Lys-225. Meso-2,6-diaminopimelate is bound by residues Arg-390, 414–417 (DNPR), Gly-465, and Glu-469. The short motif at 414–417 (DNPR) is the Meso-diaminopimelate recognition motif element.

This sequence belongs to the MurCDEF family. MurE subfamily. Mg(2+) is required as a cofactor. In terms of processing, carboxylation is probably crucial for Mg(2+) binding and, consequently, for the gamma-phosphate positioning of ATP.

Its subcellular location is the cytoplasm. It carries out the reaction UDP-N-acetyl-alpha-D-muramoyl-L-alanyl-D-glutamate + meso-2,6-diaminopimelate + ATP = UDP-N-acetyl-alpha-D-muramoyl-L-alanyl-gamma-D-glutamyl-meso-2,6-diaminopimelate + ADP + phosphate + H(+). It functions in the pathway cell wall biogenesis; peptidoglycan biosynthesis. Its function is as follows. Catalyzes the addition of meso-diaminopimelic acid to the nucleotide precursor UDP-N-acetylmuramoyl-L-alanyl-D-glutamate (UMAG) in the biosynthesis of bacterial cell-wall peptidoglycan. The polypeptide is UDP-N-acetylmuramoyl-L-alanyl-D-glutamate--2,6-diaminopimelate ligase (Escherichia coli O157:H7).